The chain runs to 488 residues: Coiled-coil domain-containing protein 77 (488 aa).

Residues 21–48 form a disordered region; it reads GVAVSGPTKRRGMADSLESTPLPSPEDR. The residue at position 36 (serine 36) is a Phosphoserine. A Glycyl lysine isopeptide (Lys-Gly) (interchain with G-Cter in SUMO2) cross-link involves residue lysine 51. Coiled coils occupy residues 55-118 and 208-488; these read SKEL…QVCL and KESS…LRLC. Residues 192 to 213 form a disordered region; sequence FKADPKISKRRPSRERKESSEH.

The chain is Coiled-coil domain-containing protein 77 (CCDC77) from Homo sapiens (Human).